We begin with the raw amino-acid sequence, 255 residues long: 4-hydroxy-tetrahydrodipicolinate reductase (255 aa).

NAD(+)-binding positions include 8-13, 88-90, and 112-115; these read GANGRV, GTT, and ATNM. Histidine 144 acts as the Proton donor/acceptor in catalysis. Histidine 145 is a binding site for (S)-2,3,4,5-tetrahydrodipicolinate. Lysine 148 acts as the Proton donor in catalysis. 154 to 155 contributes to the (S)-2,3,4,5-tetrahydrodipicolinate binding site; sequence GT.

The protein belongs to the DapB family.

The protein resides in the cytoplasm. It carries out the reaction (S)-2,3,4,5-tetrahydrodipicolinate + NAD(+) + H2O = (2S,4S)-4-hydroxy-2,3,4,5-tetrahydrodipicolinate + NADH + H(+). The catalysed reaction is (S)-2,3,4,5-tetrahydrodipicolinate + NADP(+) + H2O = (2S,4S)-4-hydroxy-2,3,4,5-tetrahydrodipicolinate + NADPH + H(+). It functions in the pathway amino-acid biosynthesis; L-lysine biosynthesis via DAP pathway; (S)-tetrahydrodipicolinate from L-aspartate: step 4/4. Catalyzes the conversion of 4-hydroxy-tetrahydrodipicolinate (HTPA) to tetrahydrodipicolinate. This is 4-hydroxy-tetrahydrodipicolinate reductase from Sulfurimonas denitrificans (strain ATCC 33889 / DSM 1251) (Thiomicrospira denitrificans (strain ATCC 33889 / DSM 1251)).